The sequence spans 160 residues: ATP synthase subunit b (160 aa).

Residues 13-33 traverse the membrane as a helical segment; that stretch reads VNLAIVIGVLVWFLRGFLGGI.

Belongs to the ATPase B chain family. As to quaternary structure, F-type ATPases have 2 components, F(1) - the catalytic core - and F(0) - the membrane proton channel. F(1) has five subunits: alpha(3), beta(3), gamma(1), delta(1), epsilon(1). F(0) has four main subunits: a(1), b(1), b'(1) and c(10-14). The alpha and beta chains form an alternating ring which encloses part of the gamma chain. F(1) is attached to F(0) by a central stalk formed by the gamma and epsilon chains, while a peripheral stalk is formed by the delta, b and b' chains.

It localises to the cellular thylakoid membrane. F(1)F(0) ATP synthase produces ATP from ADP in the presence of a proton or sodium gradient. F-type ATPases consist of two structural domains, F(1) containing the extramembraneous catalytic core and F(0) containing the membrane proton channel, linked together by a central stalk and a peripheral stalk. During catalysis, ATP synthesis in the catalytic domain of F(1) is coupled via a rotary mechanism of the central stalk subunits to proton translocation. Its function is as follows. Component of the F(0) channel, it forms part of the peripheral stalk, linking F(1) to F(0). This chain is ATP synthase subunit b, found in Parasynechococcus marenigrum (strain WH8102).